Here is a 1226-residue protein sequence, read N- to C-terminus: DNA-directed RNA polymerase subunit beta'' (1226 aa).

Cysteine 223, cysteine 297, cysteine 304, and cysteine 307 together coordinate Zn(2+).

The protein belongs to the RNA polymerase beta' chain family. RpoC2 subfamily. As to quaternary structure, in plastids the minimal PEP RNA polymerase catalytic core is composed of four subunits: alpha, beta, beta', and beta''. When a (nuclear-encoded) sigma factor is associated with the core the holoenzyme is formed, which can initiate transcription. Zn(2+) is required as a cofactor.

The protein resides in the plastid. It localises to the chloroplast. It carries out the reaction RNA(n) + a ribonucleoside 5'-triphosphate = RNA(n+1) + diphosphate. DNA-dependent RNA polymerase catalyzes the transcription of DNA into RNA using the four ribonucleoside triphosphates as substrates. The sequence is that of DNA-directed RNA polymerase subunit beta'' from Pyropia yezoensis (Susabi-nori).